The primary structure comprises 184 residues: Thiosulfate dehydrogenase [quinone] large subunit (184 aa).

4 helical membrane passes run 21 to 38 (LFPV…GGLR), 86 to 106 (FLTV…IGLL), 109 to 129 (LAAL…WLGS), and 137 to 157 (IGAL…GRVW).

In terms of assembly, heterodimer of a large and a small subunit in a 2:2 stoichiometry. TQO may associate with the terminal oxidase formed by doxBCE.

It is found in the cell membrane. The catalysed reaction is 6-decylubiquinone + 2 thiosulfate = 6-decylubiquinol + tetrathionate. Inhibited by sulfite, metabisulfite and dithonite. Functionally, TQO plays a role in sulfur oxidation and is proposed to couple sulfur oxidation to dioxygen reduction; caldariellaquinone or sulfolobus quinone seem to serve to transfer electrons to the electron transport chain terminal oxidase formed by DoxBCE. The polypeptide is Thiosulfate dehydrogenase [quinone] large subunit (doxD) (Acidianus ambivalens (Desulfurolobus ambivalens)).